Reading from the N-terminus, the 196-residue chain is Imidazoleglycerol-phosphate dehydratase (196 aa).

This sequence belongs to the imidazoleglycerol-phosphate dehydratase family.

The protein localises to the cytoplasm. It carries out the reaction D-erythro-1-(imidazol-4-yl)glycerol 3-phosphate = 3-(imidazol-4-yl)-2-oxopropyl phosphate + H2O. Its pathway is amino-acid biosynthesis; L-histidine biosynthesis; L-histidine from 5-phospho-alpha-D-ribose 1-diphosphate: step 6/9. The polypeptide is Imidazoleglycerol-phosphate dehydratase (Clostridium botulinum (strain 657 / Type Ba4)).